The primary structure comprises 217 residues: Thiamine-phosphate synthase (217 aa).

4-amino-2-methyl-5-(diphosphooxymethyl)pyrimidine-binding positions include 39–43 and N71; that span reads QYRDK. Mg(2+)-binding residues include D72 and D91. T110 serves as a coordination point for 4-amino-2-methyl-5-(diphosphooxymethyl)pyrimidine. Residue 137–139 participates in 2-[(2R,5Z)-2-carboxy-4-methylthiazol-5(2H)-ylidene]ethyl phosphate binding; sequence SNT. K140 is a binding site for 4-amino-2-methyl-5-(diphosphooxymethyl)pyrimidine. G167 serves as a coordination point for 2-[(2R,5Z)-2-carboxy-4-methylthiazol-5(2H)-ylidene]ethyl phosphate.

Belongs to the thiamine-phosphate synthase family. It depends on Mg(2+) as a cofactor.

The catalysed reaction is 2-[(2R,5Z)-2-carboxy-4-methylthiazol-5(2H)-ylidene]ethyl phosphate + 4-amino-2-methyl-5-(diphosphooxymethyl)pyrimidine + 2 H(+) = thiamine phosphate + CO2 + diphosphate. The enzyme catalyses 2-(2-carboxy-4-methylthiazol-5-yl)ethyl phosphate + 4-amino-2-methyl-5-(diphosphooxymethyl)pyrimidine + 2 H(+) = thiamine phosphate + CO2 + diphosphate. It catalyses the reaction 4-methyl-5-(2-phosphooxyethyl)-thiazole + 4-amino-2-methyl-5-(diphosphooxymethyl)pyrimidine + H(+) = thiamine phosphate + diphosphate. It participates in cofactor biosynthesis; thiamine diphosphate biosynthesis; thiamine phosphate from 4-amino-2-methyl-5-diphosphomethylpyrimidine and 4-methyl-5-(2-phosphoethyl)-thiazole: step 1/1. Its function is as follows. Condenses 4-methyl-5-(beta-hydroxyethyl)thiazole monophosphate (THZ-P) and 2-methyl-4-amino-5-hydroxymethyl pyrimidine pyrophosphate (HMP-PP) to form thiamine monophosphate (TMP). The protein is Thiamine-phosphate synthase of Saccharophagus degradans (strain 2-40 / ATCC 43961 / DSM 17024).